Here is an 807-residue protein sequence, read N- to C-terminus: Phenylalanine--tRNA ligase beta subunit (807 aa).

The 118-residue stretch at 39-156 (AGEFSGVVIG…SDAPLGQCVR (118 aa)) folds into the tRNA-binding domain. A B5 domain is found at 409-488 (PQTKDVNLRR…RIFGYNNIPN (80 aa)). Residues aspartate 466, aspartate 472, glutamate 475, and glutamate 476 each coordinate Mg(2+). An FDX-ACB domain is found at 713-806 (SRFPANRRDL…LKTELNASLR (94 aa)).

Belongs to the phenylalanyl-tRNA synthetase beta subunit family. Type 1 subfamily. As to quaternary structure, tetramer of two alpha and two beta subunits. Mg(2+) is required as a cofactor.

The protein resides in the cytoplasm. It catalyses the reaction tRNA(Phe) + L-phenylalanine + ATP = L-phenylalanyl-tRNA(Phe) + AMP + diphosphate + H(+). This Colwellia psychrerythraea (strain 34H / ATCC BAA-681) (Vibrio psychroerythus) protein is Phenylalanine--tRNA ligase beta subunit.